A 381-amino-acid chain; its full sequence is MEMYFKRMKDEWTGLVEQADPLIRAKAAEIALAHAHYLSIEFYRIVRIDPHAEEFLSNEQVERQLKSAMERWIINVLSAQVDDVERLIQIQHTVAEVHARIGIPVEIVEMGFRVLKKILYPVIFSSDYSAAEKLQVYHFSINSIDIAMEVMTRAFTFSDSSASKEDENYRIFSLLENGEEEKERQIASILSWEIDIIYKVLLDSDLGSSLPLSQADFGLWFNHKGRHYFSGIAEVGHISRLIQDFDGIFNQTMRNTRILNNRSLRVKFLLQIRNTVSQIITLLRELFEEVSRHEVGMDVLTKLLNRRFLPTIFKREIAHANRTGTPLSVLIIDVDKFKEINDTWGHNTGDEILRKVSFLSQKRLVKSKILGAGSSRKLAVS.

Residue His98 coordinates heme. The region spanning 325–381 (TPLSVLIIDVDKFKEINDTWGHNTGDEILRKVSFLSQKRLVKSKILGAGSSRKLAVS) is the GGDEF domain. Asp333 is a Mg(2+) binding site. Substrate is bound by residues Asn341 and Asp350.

Requires heme as cofactor. Mg(2+) is required as a cofactor.

The enzyme catalyses 2 GTP = 3',3'-c-di-GMP + 2 diphosphate. The protein operates within purine metabolism; 3',5'-cyclic di-GMP biosynthesis. In terms of biological role, globin-coupled heme-based oxygen sensor protein displaying diguanylate cyclase (DGC) activity in response to oxygen availability. Thus, catalyzes the synthesis of cyclic diguanylate (c-di-GMP) via the condensation of 2 GTP molecules. Cyclic-di-GMP is a second messenger which controls cell surface-associated traits in bacteria. The polypeptide is Diguanylate cyclase DosC (dosC) (Shigella flexneri serotype 5b (strain 8401)).